A 213-amino-acid chain; its full sequence is Ras-related protein Rab-25 (213 aa).

GTP is bound by residues Ser21, Gly24, Lys25, Thr26, Asn27, Ser38, His39, Thr43, and Thr44. Thr26 provides a ligand contact to Mg(2+). Short sequence motifs (switch) lie at residues 35-49 and 67-84; these read NEFS…GVEF and DTAG…YYRG. Residues Thr44 and Asp67 each coordinate Mg(2+). GTP contacts are provided by Gly70, Asn125, Lys126, Asp128, Ala156, and Leu157. Residues Cys209 and Cys210 are each lipidated (S-geranylgeranyl cysteine). Cys210 is subject to Cysteine methyl ester. The propeptide at 211 to 213 is removed in mature form; sequence ISL.

The protein belongs to the small GTPase superfamily. Rab family. As to quaternary structure, interacts (GTP-bound form) with RAB11FIP1, RAB11FIP2, RAB11FIP3 and RAB11FIP4. Interacts (via the hypervariable C-terminal region) with ITGB1 (via the cytoplasmic region); the interaction is GTP-dependent. Interacts with ITGAV. Associates with the integrin alpha-V/beta-1 heterodimer. Interacts with VPS33B. Requires Mg(2+) as cofactor.

It is found in the cell membrane. The protein localises to the cell projection. Its subcellular location is the pseudopodium membrane. It localises to the cytoplasmic vesicle. It catalyses the reaction GTP + H2O = GDP + phosphate + H(+). Its activity is regulated as follows. Regulated by guanine nucleotide exchange factors (GEFs) which promote the exchange of bound GDP for free GTP. Regulated by GTPase activating proteins (GAPs) which increase the GTP hydrolysis activity. Inhibited by GDP dissociation inhibitors (GDIs) which prevent Rab-GDP dissociation. Functionally, the small GTPases Rab are key regulators of intracellular membrane trafficking, from the formation of transport vesicles to their fusion with membranes. Rabs cycle between an inactive GDP-bound form and an active GTP-bound form that is able to recruit to membranes different set of downstream effectors directly responsible for vesicle formation, movement, tethering and fusion. RAB25 regulates epithelial cell differentiation, proliferation and survival, thereby playing key roles in tumorigenesis. Promotes invasive migration of cells in which it functions to localize and maintain integrin alpha-V/beta-1 at the tips of extending pseudopodia. Involved in the regulation of epithelial morphogenesis through the control of CLDN4 expression and localization at tight junctions. May selectively regulate the apical recycling pathway. Together with MYO5B regulates transcytosis. The protein is Ras-related protein Rab-25 (RAB25) of Bos taurus (Bovine).